The chain runs to 68 residues: Conotoxin Pu5.5 (68 aa).

An N-terminal signal peptide occupies residues 1 to 22 (MRCVPVFIILLVLIASAPSVDA). A propeptide spanning residues 23–49 (RPQTKDDALASFRDSIKRHLQTLLDAR) is cleaved from the precursor.

It belongs to the conotoxin T superfamily. In terms of processing, contains 2 disulfide bonds that can be either 'C1-C3, C2-C4' or 'C1-C4, C2-C3', since these disulfide connectivities have been observed for conotoxins with cysteine framework V (for examples, see AC P0DQQ7 and AC P81755). In terms of tissue distribution, expressed by the venom duct.

The protein resides in the secreted. The sequence is that of Conotoxin Pu5.5 from Conus pulicarius (Flea-bitten cone).